The primary structure comprises 283 residues: uncharacterized protein (283 aa).

In terms of domain architecture, HTH rpiR-type spans T3–P79. A DNA-binding region (H-T-H motif) is located at residues V39–K58. The region spanning A123 to E264 is the SIS domain.

This is an uncharacterized protein from Bacillus subtilis (strain 168).